The chain runs to 953 residues: Nonsense-mediated mRNA decay factor SMG8 (953 aa).

Disordered regions lie at residues 571–604 (AQDAELDPDEEDEELPTGEREEQHITQSNGCSQP) and 629–653 (PCFDQSSSSEAESTCSGTSSEESNN). Positions 574–586 (AELDPDEEDEELP) are enriched in acidic residues. Residues 595–604 (ITQSNGCSQP) are compositionally biased toward polar residues. The segment covering 634 to 653 (SSSSEAESTCSGTSSEESNN) has biased composition (low complexity).

It belongs to the SMG8 family.

Functionally, involved in nonsense-mediated decay (NMD) of mRNAs containing premature stop codons. Probable component of kinase complex containing nonC and recruited to stalled ribosomes. This is Nonsense-mediated mRNA decay factor SMG8 from Drosophila persimilis (Fruit fly).